The following is a 118-amino-acid chain: Aspartate 1-decarboxylase (118 aa).

The active-site Schiff-base intermediate with substrate; via pyruvic acid is serine 25. Serine 25 is modified (pyruvic acid (Ser)). Threonine 57 contributes to the substrate binding site. Tyrosine 58 functions as the Proton donor in the catalytic mechanism. 73–75 provides a ligand contact to substrate; the sequence is GAA.

The protein belongs to the PanD family. As to quaternary structure, heterooctamer of four alpha and four beta subunits. Pyruvate serves as cofactor. Post-translationally, is synthesized initially as an inactive proenzyme, which is activated by self-cleavage at a specific serine bond to produce a beta-subunit with a hydroxyl group at its C-terminus and an alpha-subunit with a pyruvoyl group at its N-terminus.

It localises to the cytoplasm. The enzyme catalyses L-aspartate + H(+) = beta-alanine + CO2. The protein operates within cofactor biosynthesis; (R)-pantothenate biosynthesis; beta-alanine from L-aspartate: step 1/1. Its function is as follows. Catalyzes the pyruvoyl-dependent decarboxylation of aspartate to produce beta-alanine. The chain is Aspartate 1-decarboxylase from Phenylobacterium zucineum (strain HLK1).